Here is a 350-residue protein sequence, read N- to C-terminus: ALA-interacting subunit 5 (350 aa).

Residues 1–23 are disordered; it reads MSSTAASSTVGGGGSSEISGVKK. Ser-2 bears the N-acetylserine mark. A helical membrane pass occupies residues 50-70; that stretch reads VILTFLVAGVVFIPLGVICLF. Residues Asn-181 and Asn-231 are each glycosylated (N-linked (GlcNAc...) asparagine). Residues 304–324 form a helical membrane-spanning segment; sequence FLGIAYLTVGSICLFLAVTFA.

This sequence belongs to the CDC50/LEM3 family. In terms of assembly, interacts with ALA2 and ALA3 in a heterologous system. In terms of tissue distribution, expressed in roots, leaves, stems, flowers and siliques.

The protein resides in the golgi apparatus membrane. The protein localises to the prevacuolar compartment membrane. It localises to the endoplasmic reticulum membrane. Functionally, required for the lipid transport activity of the ALA/ALIS P4-ATPase complex. This chain is ALA-interacting subunit 5 (ALIS5), found in Arabidopsis thaliana (Mouse-ear cress).